We begin with the raw amino-acid sequence, 355 residues long: N-acylethanolamine-hydrolyzing acid amidase (355 aa).

The N-terminal stretch at 1–17 is a signal peptide; sequence MLLLQIILLLLPVICSA. Catalysis depends on Cys-122, which acts as the Nucleophile. 3 N-linked (GlcNAc...) asparagine glycosylation sites follow: Asn-150, Asn-160, and Asn-328.

This sequence belongs to the acid ceramidase family. As to quaternary structure, heterodimer of an alpha and a beta subunit, produced by autocatalytic cleavage. Post-translationally, N-glycosylated. In terms of processing, autoproteolytic cleavage at pH 4.5 gives rise to the alpha and beta subunit. Cleavage gives rise to a conformation change that activates the enzyme. The same catalytic Cys residue mediates the autoproteolytic cleavage and subsequent hydrolysis of lipid substrates.

Its subcellular location is the lysosome. The protein resides in the membrane. The enzyme catalyses N-hexadecanoylethanolamine + H2O = ethanolamine + hexadecanoate. The catalysed reaction is an N-(long-chain fatty acyl)ethanolamine + H2O = a long-chain fatty acid + ethanolamine. It functions in the pathway lipid metabolism; fatty acid metabolism. In terms of biological role, degrades bioactive fatty acid amides, such as N-palmitoylethanolamine, to ethanolamine and free fatty acids. In Caenorhabditis elegans, this protein is N-acylethanolamine-hydrolyzing acid amidase.